Consider the following 92-residue polypeptide: Small ribosomal subunit protein uS17 (92 aa).

This sequence belongs to the universal ribosomal protein uS17 family. In terms of assembly, part of the 30S ribosomal subunit.

In terms of biological role, one of the primary rRNA binding proteins, it binds specifically to the 5'-end of 16S ribosomal RNA. This is Small ribosomal subunit protein uS17 from Corynebacterium glutamicum (strain ATCC 13032 / DSM 20300 / JCM 1318 / BCRC 11384 / CCUG 27702 / LMG 3730 / NBRC 12168 / NCIMB 10025 / NRRL B-2784 / 534).